The sequence spans 408 residues: CinA-like protein (408 aa).

Belongs to the CinA family.

This is CinA-like protein from Thermotoga maritima (strain ATCC 43589 / DSM 3109 / JCM 10099 / NBRC 100826 / MSB8).